Here is a 263-residue protein sequence, read N- to C-terminus: GTP cyclohydrolase FolE2 (263 aa).

The protein belongs to the GTP cyclohydrolase IV family.

The enzyme catalyses GTP + H2O = 7,8-dihydroneopterin 3'-triphosphate + formate + H(+). The protein operates within cofactor biosynthesis; 7,8-dihydroneopterin triphosphate biosynthesis; 7,8-dihydroneopterin triphosphate from GTP: step 1/1. Functionally, converts GTP to 7,8-dihydroneopterin triphosphate. The sequence is that of GTP cyclohydrolase FolE2 from Nitrosospira multiformis (strain ATCC 25196 / NCIMB 11849 / C 71).